Consider the following 428-residue polypeptide: MGEEQVQEFKLKEDCELRFAAGEDSEVVLELVHGYAEIFGTEIILNKKYNFPAKSRVAVFTWKSATIELVGATESAYVAESTPMVIYLNIHAAMEESRKKREEQAVSNSSKPKGPRLLLVGPQDVGKTTVSRILCNYSVRHGRTPILVDLDVGQNSVSVPGSVAALLVQKTADVVDGFERNMPIVYNFGHSSPSQNLSLYETLFKALASTINSQIEQNDEARLGGMIINTCGWVDGEGYKCIVKAASAFEVDVVIVLDHERLYSDLSKELPEFVRLTHVPKSGGVEQRTAQIRSATRGENVHRYFYGTRANNLFPFTFDVPFDTVTLCKIGAEQLPDSCLPFGMEVENHETKIIIIEPSVEIKHHLFSFSRGSIAEKNVLTSSVWGFCLITEVDMEKRTISILCPQNTIPSKTLVYSEVTHLDDQIER.

2 residues coordinate ATP: Glu-16 and Arg-56. The tract at residues 99–118 (KKREEQAVSNSSKPKGPRLL) is disordered. 124–129 (DVGKTT) serves as a coordination point for ATP.

This sequence belongs to the Clp1 family. Clp1 subfamily.

The protein resides in the nucleus. Its function is as follows. Required for endonucleolytic cleavage during polyadenylation-dependent pre-mRNA 3'-end formation. The sequence is that of Protein clpf-1 from Caenorhabditis briggsae.